The primary structure comprises 769 residues: Apoptotic enhancer 1 protein (769 aa).

Disordered stretches follow at residues Pro-69–Tyr-88, Ser-265–Ser-396, and Pro-451–Asp-518. Low complexity predominate over residues Gln-275–Met-284. The span at Lys-285–Leu-295 shows a compositional bias: basic and acidic residues. Residues Ser-339–Ser-353 are compositionally biased toward low complexity. Composition is skewed to polar residues over residues Gln-354 to Arg-378, Leu-453 to Thr-467, and Asn-474 to Glu-491. ANK repeat units lie at residues Glu-585 to Ser-617 and Asp-618 to Asp-652. The 63-residue stretch at Ile-684–Ser-746 folds into the SH3 domain.

This sequence belongs to the iASPP family. As to quaternary structure, interacts with cep-1/p53; the interaction inhibits pro-apoptotic activity of cep-1.

The protein resides in the nucleus. Functionally, negetively regulates apoptosis via its interaction with cep-1. This Caenorhabditis elegans protein is Apoptotic enhancer 1 protein.